Consider the following 887-residue polypeptide: Lon protease homolog 2, peroxisomal (887 aa).

Positions 11 to 256 (LGILAFRNKV…KATELVDRHL (246 aa)) constitute a Lon N-terminal domain. Positions 72-101 (YPGGGTDSGERNVKSQPGLSDSRKADGKSQ) are disordered. Residue 409–416 (GPPGVGKT) participates in ATP binding. The Lon proteolytic domain occupies 693 to 878 (VSNPGVSVGL…EVLEQAFEGG (186 aa)). Catalysis depends on residues serine 784 and lysine 827. The Microbody targeting signal motif lies at 885 to 887 (ARL).

This sequence belongs to the peptidase S16 family.

Its subcellular location is the peroxisome matrix. It carries out the reaction Hydrolysis of proteins in presence of ATP.. Functionally, ATP-dependent serine protease that mediates the selective degradation of misfolded and unassembled polypeptides in the peroxisomal matrix. Necessary for type 2 peroxisome targeting signal (PTS2)-containing protein processing and facilitates peroxisome matrix protein import. This is Lon protease homolog 2, peroxisomal from Spinacia oleracea (Spinach).